Consider the following 372-residue polypeptide: sn-glycerol-3-phosphate import ATP-binding protein UgpC (372 aa).

The region spanning 2–233 (LDIQQLVKTY…PASTFVASFI (232 aa)) is the ABC transporter domain. 35–42 (GPSGCGKS) contacts ATP.

Belongs to the ABC transporter superfamily. sn-glycerol-3-phosphate importer (TC 3.A.1.1.3) family. The complex is composed of two ATP-binding proteins (UgpC), two transmembrane proteins (UgpA and UgpE) and a solute-binding protein (UgpB).

It localises to the cell inner membrane. It carries out the reaction sn-glycerol 3-phosphate(out) + ATP + H2O = sn-glycerol 3-phosphate(in) + ADP + phosphate + H(+). In terms of biological role, part of the ABC transporter complex UgpBAEC involved in sn-glycerol-3-phosphate (G3P) import. Responsible for energy coupling to the transport system. This Vibrio vulnificus (strain YJ016) protein is sn-glycerol-3-phosphate import ATP-binding protein UgpC.